The chain runs to 201 residues: dTTP/UTP pyrophosphatase (201 aa).

D81 serves as the catalytic Proton acceptor.

This sequence belongs to the Maf family. YhdE subfamily. The cofactor is a divalent metal cation.

The protein resides in the cytoplasm. The catalysed reaction is dTTP + H2O = dTMP + diphosphate + H(+). It catalyses the reaction UTP + H2O = UMP + diphosphate + H(+). In terms of biological role, nucleoside triphosphate pyrophosphatase that hydrolyzes dTTP and UTP. May have a dual role in cell division arrest and in preventing the incorporation of modified nucleotides into cellular nucleic acids. The sequence is that of dTTP/UTP pyrophosphatase from Dechloromonas aromatica (strain RCB).